A 1183-amino-acid polypeptide reads, in one-letter code: PAN2-PAN3 deadenylation complex catalytic subunit PAN2 (1183 aa).

Residues 1–24 (MDGWTEISRIAATTQPPKGPSPHI) are disordered. WD repeat units follow at residues 159–207 (DLNK…SIKS), 269–309 (PFPA…NVFL), and 327–366 (SKAP…STIT). Residues 369 to 520 (FVNFPASIEQ…FQYKVPLSRK (152 aa)) form a linker region. Residues 521-919 (KIPNCYSRLQ…KPVILVYHDS (399 aa)) enclose the USP domain. In terms of domain architecture, Exonuclease spans 977–1151 (IAIDAEFVNL…EDAYTALLLY (175 aa)). A divalent metal cation contacts are provided by Asp-980, Glu-982, Asp-1090, and Asp-1143.

It belongs to the peptidase C19 family. PAN2 subfamily. As to quaternary structure, forms a heterotrimer with an asymmetric homodimer of the regulatory subunit PAN3 to form the poly(A)-nuclease (PAN) deadenylation complex. A divalent metal cation is required as a cofactor.

The protein resides in the cytoplasm. The catalysed reaction is Exonucleolytic cleavage of poly(A) to 5'-AMP.. With respect to regulation, positively regulated by the regulatory subunit PAN3. Functionally, catalytic subunit of the poly(A)-nuclease (PAN) deadenylation complex, one of two cytoplasmic mRNA deadenylases involved in mRNA turnover. PAN specifically shortens poly(A) tails of RNA and the activity is stimulated by poly(A)-binding protein PAB1. PAN deadenylation is followed by rapid degradation of the shortened mRNA tails by the CCR4-NOT complex. Deadenylated mRNAs are then degraded by two alternative mechanisms, namely exosome-mediated 3'-5' exonucleolytic degradation, or deadenylation-dependent mRNA decaping and subsequent 5'-3' exonucleolytic degradation by XRN1. May also be involved in post-transcriptional maturation of mRNA poly(A) tails. The polypeptide is PAN2-PAN3 deadenylation complex catalytic subunit PAN2 (Scheffersomyces stipitis (strain ATCC 58785 / CBS 6054 / NBRC 10063 / NRRL Y-11545) (Yeast)).